The chain runs to 555 residues: CTP synthase (555 aa).

The interval 1 to 270 (MTKFVFVTGG…DGLICDKLRL (270 aa)) is amidoligase domain. S13 is a binding site for CTP. Residue S13 coordinates UTP. Residues 14 to 19 (SLGKGI) and D71 each bind ATP. Mg(2+)-binding residues include D71 and E144. Residues 151–153 (DIE), 191–196 (KTKPTQ), and K227 contribute to the CTP site. UTP is bound by residues 191 to 196 (KTKPTQ) and K227. The 253-residue stretch at 295–547 (NIVMVGKYVE…IKAALDHQAA (253 aa)) folds into the Glutamine amidotransferase type-1 domain. G356 is a binding site for L-glutamine. Residue C383 is the Nucleophile; for glutamine hydrolysis of the active site. L-glutamine-binding positions include 384-387 (LGMQ), E407, and R473. Catalysis depends on residues H520 and E522.

The protein belongs to the CTP synthase family. In terms of assembly, homotetramer.

The catalysed reaction is UTP + L-glutamine + ATP + H2O = CTP + L-glutamate + ADP + phosphate + 2 H(+). It carries out the reaction L-glutamine + H2O = L-glutamate + NH4(+). It catalyses the reaction UTP + NH4(+) + ATP = CTP + ADP + phosphate + 2 H(+). It functions in the pathway pyrimidine metabolism; CTP biosynthesis via de novo pathway; CTP from UDP: step 2/2. With respect to regulation, allosterically activated by GTP, when glutamine is the substrate; GTP has no effect on the reaction when ammonia is the substrate. The allosteric effector GTP functions by stabilizing the protein conformation that binds the tetrahedral intermediate(s) formed during glutamine hydrolysis. Inhibited by the product CTP, via allosteric rather than competitive inhibition. Functionally, catalyzes the ATP-dependent amination of UTP to CTP with either L-glutamine or ammonia as the source of nitrogen. Regulates intracellular CTP levels through interactions with the four ribonucleotide triphosphates. The sequence is that of CTP synthase from Albidiferax ferrireducens (strain ATCC BAA-621 / DSM 15236 / T118) (Rhodoferax ferrireducens).